The chain runs to 346 residues: Dihydroorotase (346 aa).

Positions 17 and 19 each coordinate Zn(2+). Substrate contacts are provided by residues 19-21 (HVR) and Asn-45. Residues Lys-102, His-139, and His-177 each coordinate Zn(2+). Lys-102 bears the N6-carboxylysine mark. His-139 contributes to the substrate binding site. Residue Leu-222 coordinates substrate. Residue Asp-250 participates in Zn(2+) binding. Asp-250 is a catalytic residue. The substrate site is built by His-254 and Ala-266.

This sequence belongs to the metallo-dependent hydrolases superfamily. DHOase family. Class II DHOase subfamily. Homodimer. The cofactor is Zn(2+).

It carries out the reaction (S)-dihydroorotate + H2O = N-carbamoyl-L-aspartate + H(+). Its pathway is pyrimidine metabolism; UMP biosynthesis via de novo pathway; (S)-dihydroorotate from bicarbonate: step 3/3. Catalyzes the reversible cyclization of carbamoyl aspartate to dihydroorotate. This is Dihydroorotase from Delftia acidovorans (strain DSM 14801 / SPH-1).